The sequence spans 124 residues: Fluoride-specific ion channel FluC (124 aa).

A run of 4 helical transmembrane segments spans residues 4-24, 35-55, 60-80, and 102-122; these read LLLV…ISIF, FGTL…YALG, ISPE…TTFS, and VVLN…LVFS. Positions 74 and 77 each coordinate Na(+).

Belongs to the fluoride channel Fluc/FEX (TC 1.A.43) family.

Its subcellular location is the cell inner membrane. The enzyme catalyses fluoride(in) = fluoride(out). With respect to regulation, na(+) is not transported, but it plays an essential structural role and its presence is essential for fluoride channel function. Functionally, fluoride-specific ion channel. Important for reducing fluoride concentration in the cell, thus reducing its toxicity. The polypeptide is Fluoride-specific ion channel FluC (Shewanella baltica (strain OS223)).